Here is a 288-residue protein sequence, read N- to C-terminus: Chemotaxis protein methyltransferase 2 (288 aa).

One can recognise a CheR-type methyltransferase domain in the interval M1–K280. S-adenosyl-L-methionine contacts are provided by residues N76, T78, R82, E119, D145, N200 to L201, and R219 to N220.

The catalysed reaction is L-glutamyl-[protein] + S-adenosyl-L-methionine = [protein]-L-glutamate 5-O-methyl ester + S-adenosyl-L-homocysteine. Methylation of the membrane-bound methyl-accepting chemotaxis proteins (MCP) to form gamma-glutamyl methyl ester residues in MCP. In Vibrio cholerae serotype O1 (strain ATCC 39315 / El Tor Inaba N16961), this protein is Chemotaxis protein methyltransferase 2 (cheR2).